Here is a 756-residue protein sequence, read N- to C-terminus: Subtilisin-like protease SBT3.9 (756 aa).

An N-terminal signal peptide occupies residues methionine 1–alanine 25. Residues glutamate 26–threonine 108 constitute a propeptide, activation peptide. Residues valine 29–glutamate 106 enclose the Inhibitor I9 domain. The region spanning threonine 112–valine 603 is the Peptidase S8 domain. The active-site Charge relay system is aspartate 142. Residues asparagine 175 and asparagine 202 are each glycosylated (N-linked (GlcNAc...) asparagine). Catalysis depends on histidine 218, which acts as the Charge relay system. 4 N-linked (GlcNAc...) asparagine glycosylation sites follow: asparagine 233, asparagine 357, asparagine 395, and asparagine 519. In terms of domain architecture, PA spans aspartate 386 to isoleucine 460. Serine 534 (charge relay system) is an active-site residue.

The protein belongs to the peptidase S8 family.

It is found in the secreted. In Arabidopsis thaliana (Mouse-ear cress), this protein is Subtilisin-like protease SBT3.9.